A 470-amino-acid chain; its full sequence is 3-isopropylmalate dehydratase large subunit (470 aa).

[4Fe-4S] cluster-binding residues include C349, C409, and C412.

This sequence belongs to the aconitase/IPM isomerase family. LeuC type 1 subfamily. As to quaternary structure, heterodimer of LeuC and LeuD. Requires [4Fe-4S] cluster as cofactor.

The catalysed reaction is (2R,3S)-3-isopropylmalate = (2S)-2-isopropylmalate. Its pathway is amino-acid biosynthesis; L-leucine biosynthesis; L-leucine from 3-methyl-2-oxobutanoate: step 2/4. Catalyzes the isomerization between 2-isopropylmalate and 3-isopropylmalate, via the formation of 2-isopropylmaleate. The polypeptide is 3-isopropylmalate dehydratase large subunit (Campylobacter jejuni subsp. jejuni serotype O:2 (strain ATCC 700819 / NCTC 11168)).